The sequence spans 607 residues: UvrABC system protein C (607 aa).

In terms of domain architecture, GIY-YIG spans 14–93 (HKPGVYLMLD…IKKHKPRYNI (80 aa)). One can recognise a UVR domain in the interval 203–238 (RDLLAELKRQMLQASERLNFEQAGQFRDQIRALKTT).

This sequence belongs to the UvrC family. In terms of assembly, interacts with UvrB in an incision complex.

It localises to the cytoplasm. Functionally, the UvrABC repair system catalyzes the recognition and processing of DNA lesions. UvrC both incises the 5' and 3' sides of the lesion. The N-terminal half is responsible for the 3' incision and the C-terminal half is responsible for the 5' incision. The sequence is that of UvrABC system protein C from Desulfotalea psychrophila (strain LSv54 / DSM 12343).